The chain runs to 505 residues: Acetyl-coenzyme A carboxylase carboxyl transferase subunit beta, chloroplastic (505 aa).

The segment covering 189–205 (ESVSNSKSGSSSIRTGG) has biased composition (low complexity). Residues 189–213 (ESVSNSKSGSSSIRTGGNSSDFNRR) form a disordered region. Positions 228–499 (LWVQCENCYG…NQNSSRALGS (272 aa)) constitute a CoA carboxyltransferase N-terminal domain. 4 residues coordinate Zn(2+): C232, C235, C251, and C254. A C4-type zinc finger spans residues 232-254 (CENCYGLNYKKFVSFKMHICEQC).

It belongs to the AccD/PCCB family. Acetyl-CoA carboxylase is a heterohexamer composed of biotin carboxyl carrier protein, biotin carboxylase and 2 subunits each of ACCase subunit alpha and ACCase plastid-coded subunit beta (accD). It depends on Zn(2+) as a cofactor.

It is found in the plastid. It localises to the chloroplast stroma. It carries out the reaction N(6)-carboxybiotinyl-L-lysyl-[protein] + acetyl-CoA = N(6)-biotinyl-L-lysyl-[protein] + malonyl-CoA. It participates in lipid metabolism; malonyl-CoA biosynthesis; malonyl-CoA from acetyl-CoA: step 1/1. Functionally, component of the acetyl coenzyme A carboxylase (ACC) complex. Biotin carboxylase (BC) catalyzes the carboxylation of biotin on its carrier protein (BCCP) and then the CO(2) group is transferred by the transcarboxylase to acetyl-CoA to form malonyl-CoA. The sequence is that of Acetyl-coenzyme A carboxylase carboxyl transferase subunit beta, chloroplastic from Calycanthus floridus var. glaucus (Eastern sweetshrub).